Here is a 77-residue protein sequence, read N- to C-terminus: NAD(P)H-quinone oxidoreductase subunit L (77 aa).

Transmembrane regions (helical) follow at residues 12 to 32 (LIAYIGIISTYLLVIPLLLFY) and 47 to 67 (LGIYGLVFLFFPGLILFSPFL).

The protein belongs to the complex I NdhL subunit family. NDH-1 can be composed of about 15 different subunits; different subcomplexes with different compositions have been identified which probably have different functions.

It localises to the cellular thylakoid membrane. It catalyses the reaction a plastoquinone + NADH + (n+1) H(+)(in) = a plastoquinol + NAD(+) + n H(+)(out). The enzyme catalyses a plastoquinone + NADPH + (n+1) H(+)(in) = a plastoquinol + NADP(+) + n H(+)(out). In terms of biological role, NDH-1 shuttles electrons from an unknown electron donor, via FMN and iron-sulfur (Fe-S) centers, to quinones in the respiratory and/or the photosynthetic chain. The immediate electron acceptor for the enzyme in this species is believed to be plastoquinone. Couples the redox reaction to proton translocation, and thus conserves the redox energy in a proton gradient. Cyanobacterial NDH-1 also plays a role in inorganic carbon-concentration. The protein is NAD(P)H-quinone oxidoreductase subunit L of Prochlorococcus marinus (strain MIT 9301).